Here is a 1069-residue protein sequence, read N- to C-terminus: Epstein-Barr nuclear antigen 6 (1069 aa).

Disordered stretches follow at residues 1-75 (MESF…RIRR), 353-708 (MLAT…PCQS), 733-776 (SSMS…LYPG), 884-932 (REPR…PPRL), and 1008-1069 (PLDI…SELD). The segment covering 50–67 (PDSRDQQSRGQRRGDENR) has biased composition (basic and acidic residues). 2 stretches are compositionally biased toward acidic residues: residues 381–391 (VELESSDDELP) and 507–524 (YDDD…EEET). A compositionally biased stretch (polar residues) spans 543 to 561 (STGSAMSSSHTDPSVTQPS). Low complexity predominate over residues 689–708 (QQEPSSQQQPATQSTPPCQS). The span at 742–751 (SHEEQPRYED) shows a compositional bias: basic and acidic residues. The span at 1032–1048 (SQATSEAQEILSDNSEI) shows a compositional bias: polar residues.

Belongs to the herpesviridae EBNA-6 family. Interacts with host CTPB1; this interaction leads to gene repression, but also seems to interfere with the repressive function of CtBP pre-bound to DNA, leading to EBNA6 mediated up-regulation of many host genes. Interacts with host MYC; this interaction enhances MYC stability. Interacts (via N-terminus) with host RBPJ. Interacts (via N-terminus) with host histone H2AX; this interaction facilitates H2AX proteasomal degradation. Interacts with host TP73; this interaction inhibits TP73-mediated apoptotic pathway. Interacts (via N-terminus) with host PIM1; this interaction upregulates and stabilizes PIM1 and induces cell proliferation by inhibiting the growth suppressive properties of p21.

It localises to the host nucleus. Its subcellular location is the host nucleus matrix. Functionally, plays an essential role for the activation and immortalization of human B-cells. Represses transcription of viral promoters TP1 and Cp through interaction with host RBPJ, and inhibits EBNA2-mediated activation of these promoters. Targets host chromatin through interactions with host transcription factors, especially RBPJ and IRF4. Alternatively, EBNA6 also regulates the transcription of the EBV oncogene LMP1 in a cell cycle-dependent manner. Modulates the activity of several host proteins involved in cell cycle regulation including host cyclin A, MYC, RB, p21 and p27 mainly through binding to the host SCF(SKP2) complex. Inhibits the promoter of host H2AX and targets H2AX to proteasomal degradation in order to promote latency and cell proliferation. Upregulates host PIM1 expression and stabilization. Potentiates PIM1 to promote cell proliferation by inhibiting the growth suppressive properties of p21. This Epstein-Barr virus (strain AG876) (HHV-4) protein is Epstein-Barr nuclear antigen 6 (EBNA6).